We begin with the raw amino-acid sequence, 101 residues long: Apolipoprotein C-II (101 aa).

Positions 1–22 are cleaved as a signal peptide; the sequence is MGTRLLPALFLVLLVLGFEVQG. The tract at residues 23–38 is O-glycosylated at one site; sequence TQQPQQDEMPSPTFLT. The interval 66–74 is lipid binding; that stretch reads AVDEKLRDL. Residues 78-101 are lipoprotein lipase cofactor; that stretch reads STAAMSTYTGIFTDQVLSVLKGEE.

This sequence belongs to the apolipoprotein C2 family. Proapolipoprotein C-II is synthesized as a sialic acid containing glycoprotein which is subsequently desialylated prior to its proteolytic processing. Post-translationally, proapolipoprotein C-II, the major form found in plasma undergoes proteolytic cleavage of its N-terminal hexapeptide to generate apolipoprotein C-II, which occurs as the minor form in plasma. Liver and intestine.

It is found in the secreted. Component of chylomicrons, very low-density lipoproteins (VLDL), low-density lipoproteins (LDL), and high-density lipoproteins (HDL) in plasma. Plays an important role in lipoprotein metabolism as an activator of lipoprotein lipase. Both proapolipoprotein C-II and apolipoprotein C-II can activate lipoprotein lipase. In normolipidemic individuals, it is mainly distributed in the HDL, whereas in hypertriglyceridemic individuals, predominantly found in the VLDL and LDL. The chain is Apolipoprotein C-II (APOC2) from Homo sapiens (Human).